We begin with the raw amino-acid sequence, 499 residues long: Cytosol aminopeptidase (499 aa).

Mn(2+)-binding residues include lysine 267 and aspartate 272. Residue lysine 279 is part of the active site. Mn(2+) is bound by residues aspartate 290, aspartate 349, and glutamate 351. Arginine 353 is an active-site residue.

The protein belongs to the peptidase M17 family. The cofactor is Mn(2+).

Its subcellular location is the cytoplasm. It carries out the reaction Release of an N-terminal amino acid, Xaa-|-Yaa-, in which Xaa is preferably Leu, but may be other amino acids including Pro although not Arg or Lys, and Yaa may be Pro. Amino acid amides and methyl esters are also readily hydrolyzed, but rates on arylamides are exceedingly low.. It catalyses the reaction Release of an N-terminal amino acid, preferentially leucine, but not glutamic or aspartic acids.. In terms of biological role, presumably involved in the processing and regular turnover of intracellular proteins. Catalyzes the removal of unsubstituted N-terminal amino acids from various peptides. The polypeptide is Cytosol aminopeptidase (pepA) (Buchnera aphidicola subsp. Acyrthosiphon pisum (strain APS) (Acyrthosiphon pisum symbiotic bacterium)).